The sequence spans 481 residues: Glucokinase-1 (481 aa).

Positions 4–477 (PKLTKAVDSI…SGVGAALCAL (474 aa)) constitute a Hexokinase domain. Residues 64–204 (SGQEHGVTML…LSNVHVVALT (141 aa)) are hexokinase small subdomain. ATP is bound at residue Lys101. The tract at residues 146–172 (KMGFTFSYPVDQTSLSSGKLIRWTKGF) is glucose-binding. The tract at residues 205-466 (NDTTGTLLAR…RDVHLRISKD (262 aa)) is hexokinase large subdomain. 466–471 (DGSGVG) is a binding site for ATP.

Belongs to the hexokinase family.

It carries out the reaction D-glucose + ATP = D-glucose 6-phosphate + ADP + H(+). The enzyme catalyses a D-hexose + ATP = a D-hexose 6-phosphate + ADP + H(+). The catalysed reaction is D-mannose + ATP = D-mannose 6-phosphate + ADP + H(+). The protein operates within carbohydrate metabolism; hexose metabolism. It participates in carbohydrate degradation; glycolysis; D-glyceraldehyde 3-phosphate and glycerone phosphate from D-glucose: step 1/4. In terms of biological role, glukokinase specific for aldohexoses. Phosphorylates glucose and mannose, but not fructose. This chain is Glucokinase-1 (GLK1), found in Kluyveromyces lactis (strain ATCC 8585 / CBS 2359 / DSM 70799 / NBRC 1267 / NRRL Y-1140 / WM37) (Yeast).